A 257-amino-acid chain; its full sequence is Imidazole glycerol phosphate synthase subunit HisF (257 aa).

Residues Asp-12 and Asp-131 contribute to the active site.

It belongs to the HisA/HisF family. In terms of assembly, heterodimer of HisH and HisF.

It localises to the cytoplasm. It carries out the reaction 5-[(5-phospho-1-deoxy-D-ribulos-1-ylimino)methylamino]-1-(5-phospho-beta-D-ribosyl)imidazole-4-carboxamide + L-glutamine = D-erythro-1-(imidazol-4-yl)glycerol 3-phosphate + 5-amino-1-(5-phospho-beta-D-ribosyl)imidazole-4-carboxamide + L-glutamate + H(+). The protein operates within amino-acid biosynthesis; L-histidine biosynthesis; L-histidine from 5-phospho-alpha-D-ribose 1-diphosphate: step 5/9. IGPS catalyzes the conversion of PRFAR and glutamine to IGP, AICAR and glutamate. The HisF subunit catalyzes the cyclization activity that produces IGP and AICAR from PRFAR using the ammonia provided by the HisH subunit. This Marinomonas sp. (strain MWYL1) protein is Imidazole glycerol phosphate synthase subunit HisF.